The chain runs to 306 residues: Recombination-associated protein RdgC (306 aa).

This sequence belongs to the RdgC family.

The protein resides in the cytoplasm. Its subcellular location is the nucleoid. In terms of biological role, may be involved in recombination. This is Recombination-associated protein RdgC from Pseudomonas aeruginosa (strain ATCC 15692 / DSM 22644 / CIP 104116 / JCM 14847 / LMG 12228 / 1C / PRS 101 / PAO1).